The primary structure comprises 483 residues: MMLQRSCIVLFFSLFLLVPQMVFSMLNRTLLLIPHPDPELVAYQVQWKVNASITRRQALDTTDQAGSTPCITGNPIDDCWKCDPNWPNNRQGLADCGIGFGQYALGGKGGQFYFVTDSSDDDAVNPKPGTLRYGVIQEEPLWIVFPSNMMIKLKQELIFNSYKTLDGRGANVHIVGGGCITLQYVSNIIIHNIHIHHCYQSGNTNVRSSPTHYGFRTKSDGDGISIFGSKDIWIDHCSLSRCKDGLIDAVMGSTGITISNNFFSHHNEVMLLGHSDHYEPDSGMQVTIAFNHFGEKLIQRMPRCRRGYIHVVNNDFTQWEMYAIGGSGNPTINSQGNRYTAPTNPFAKEVTKRVETPDGDWKGWNWRSEGDILVNGAFFVASGEGAEMRYEKAYSVEPKSASFITQITFHSGVLGVGGRNNNLGMWTTTGSEGTSGLDSYNDYTDEMSGAGSTNRLSFSVLVFLLSSISYLVVFTSSTQMFML.

The signal sequence occupies residues Met1–Ser24. Asn27 and Asn50 each carry an N-linked (GlcNAc...) asparagine glycan. 3 residues coordinate Ca(2+): Asp220, Asp244, and Asp248. The active site involves Arg300.

It belongs to the polysaccharide lyase 1 family. Ca(2+) serves as cofactor.

The enzyme catalyses Eliminative cleavage of (1-&gt;4)-alpha-D-galacturonan to give oligosaccharides with 4-deoxy-alpha-D-galact-4-enuronosyl groups at their non-reducing ends.. It participates in glycan metabolism; pectin degradation; 2-dehydro-3-deoxy-D-gluconate from pectin: step 2/5. This is Probable pectate lyase 12 from Arabidopsis thaliana (Mouse-ear cress).